The primary structure comprises 104 residues: Large ribosomal subunit protein bL21 (104 aa).

This sequence belongs to the bacterial ribosomal protein bL21 family. As to quaternary structure, part of the 50S ribosomal subunit. Contacts protein L20.

Functionally, this protein binds to 23S rRNA in the presence of protein L20. The protein is Large ribosomal subunit protein bL21 of Helicobacter pylori (strain P12).